A 458-amino-acid chain; its full sequence is RuvB-like helicase 1 (458 aa).

A compositionally biased stretch (basic and acidic residues) spans Met-1 to Thr-18. Residues Met-1–Ala-20 are disordered. Gly-73–Thr-80 contributes to the ATP binding site.

The protein belongs to the RuvB family. In terms of assembly, may form heterododecamers with RVB2. Component of the SWR1 chromatin remodeling complex, the INO80 chromatin remodeling complex, and of the R2TP complex.

It is found in the nucleus. It carries out the reaction ATP + H2O = ADP + phosphate + H(+). Functionally, DNA helicase which participates in several chromatin remodeling complexes, including the SWR1 and the INO80 complexes. The SWR1 complex mediates the ATP-dependent exchange of histone H2A for the H2A variant HZT1 leading to transcriptional regulation of selected genes by chromatin remodeling. The INO80 complex remodels chromatin by shifting nucleosomes and is involved in DNA repair. Also involved in pre-rRNA processing. The chain is RuvB-like helicase 1 (RVB1) from Candida albicans (strain SC5314 / ATCC MYA-2876) (Yeast).